The chain runs to 186 residues: GMP synthase [glutamine-hydrolyzing] subunit A (186 aa).

The region spanning 2–186 is the Glutamine amidotransferase type-1 domain; the sequence is SIVIINNFGQ…ENFNKICENY (185 aa). C76 serves as the catalytic Nucleophile. Residues H163 and E165 contribute to the active site.

Heterodimer composed of a glutamine amidotransferase subunit (A) and a GMP-binding subunit (B).

It carries out the reaction XMP + L-glutamine + ATP + H2O = GMP + L-glutamate + AMP + diphosphate + 2 H(+). It participates in purine metabolism; GMP biosynthesis; GMP from XMP (L-Gln route): step 1/1. Functionally, catalyzes the synthesis of GMP from XMP. This is GMP synthase [glutamine-hydrolyzing] subunit A from Methanosphaera stadtmanae (strain ATCC 43021 / DSM 3091 / JCM 11832 / MCB-3).